The following is a 1012-amino-acid chain: RNA-binding protein 26 (1012 aa).

Residue K94 forms a Glycyl lysine isopeptide (Lys-Gly) (interchain with G-Cter in SUMO2) linkage. Positions 98 to 127 form a coiled coil; the sequence is LQHQEKDIKKEELTKEEEREKKFSRRLNHS. A Glycyl lysine isopeptide (Lys-Gly) (interchain with G-Cter in SUMO1); alternate cross-link involves residue K106. A Glycyl lysine isopeptide (Lys-Gly) (interchain with G-Cter in SUMO2); alternate cross-link involves residue K106. Residues 106–118 show a composition bias toward basic and acidic residues; that stretch reads KKEELTKEEEREK. Residues 106–236 are disordered; that stretch reads KKEELTKEEE…PLENNYTPVS (131 aa). At S127 the chain carries Phosphoserine. Basic and acidic residues predominate over residues 134-168; it reads RYRDNRSRDERKKDDRSRKRDYDRNPPRRDSYRDR. Residues 169-186 show a composition bias toward basic residues; the sequence is YNRRRGRSRSYSRSRSRS. 2 stretches are compositionally biased toward basic and acidic residues: residues 187-201 and 209-227; these read WSKE…DRSR and RSRE…RTDP. The segment at 288–316 adopts a C3H1-type zinc-finger fold; it reads PMPKKRCRDYDEKGFCMRGDMCPFDHGSD. Pro residues predominate over residues 334-388; the sequence is QPPVVEGPPPPGLPPPPPILTPPPVNLRPPVPPPGPLPPSLPPVTGPPPPLPPLQ. Disordered stretches follow at residues 334–404 and 465–520; these read QPPV…SSVP and IGLT…NFNR. Positions 394–404 are enriched in low complexity; sequence APPNSATSSVP. S501 carries the post-translational modification Phosphoserine. K515 carries the N6-acetyllysine modification. A Phosphoserine modification is found at S523. Positions 537–611 constitute an RRM 1 domain; it reads TKLELRKVPP…RFIKVYWHRE (75 aa). A Phosphoserine modification is found at S621. A disordered region spans residues 647-667; that stretch reads PVPSATTEPAEAQSATSELPQ. 2 coiled-coil regions span residues 724-800 and 828-852; these read DNNE…KSTS and KKMQ…EAAK. The interval 858 to 889 is disordered; sequence SGRGRGIHTRGRGTAHGRGRGRGRGRGVPGHA. Positions 862-882 are enriched in basic residues; sequence RGIHTRGRGTAHGRGRGRGRG. The RRM 2 domain occupies 896–965; the sequence is RALEISAFTE…QDLKLAWNKP (70 aa). Positions 970–1012 are disordered; it reads SAVDTEEAEPDEEEFQEESLVDDSLLQDDDEEEEDNESRSWRR. Acidic residues predominate over residues 973 to 1005; the sequence is DTEEAEPDEEEFQEESLVDDSLLQDDDEEEEDN.

In terms of tissue distribution, expressed in testis and ovary.

Its function is as follows. May be involved in the turnover of nuclear polyadenylated (pA+) RNA. The polypeptide is RNA-binding protein 26 (Mus musculus (Mouse)).